The chain runs to 279 residues: Tryptophan synthase alpha chain (279 aa).

Active-site proton acceptor residues include glutamate 63 and aspartate 74.

The protein belongs to the TrpA family. Tetramer of two alpha and two beta chains.

It catalyses the reaction (1S,2R)-1-C-(indol-3-yl)glycerol 3-phosphate + L-serine = D-glyceraldehyde 3-phosphate + L-tryptophan + H2O. The protein operates within amino-acid biosynthesis; L-tryptophan biosynthesis; L-tryptophan from chorismate: step 5/5. In terms of biological role, the alpha subunit is responsible for the aldol cleavage of indoleglycerol phosphate to indole and glyceraldehyde 3-phosphate. The polypeptide is Tryptophan synthase alpha chain (Prochlorococcus marinus subsp. pastoris (strain CCMP1986 / NIES-2087 / MED4)).